A 385-amino-acid chain; its full sequence is MIKKRQTRIAMIAGEMSGDLLGAGVIRELKKHLKNVEFIGVGGPQMLEEGFQSLANMSELSVMGISDVLRRYPQLYFIRERLLKEWTINPPDVFIGIDYPDFNLSVETRLKRQNVKTVHLVSPKVWAWRQKRVYLIKKAVDLVLTLFPFEESFYQQYDVPAQFVGHPLADLIEINPNNADLRKKYNYKPDDTILAVLPGSRIGEIKYIGPLFLEVMQRIAVEMPHVHFIVPIACQELYPVFFKQFQARYSHLKIQIIQGNAREAMAISDVVLTKSGTATLEAMLLKRPMVVAFKWSKFTHAIIAPQVKIPYVALPNLLANKKLVPEFVQEKATANSITESVLNLLACPSQSNLNKQFTAIHHTLRQNANEKAALSILKILETSSA.

This sequence belongs to the LpxB family.

It carries out the reaction a lipid X + a UDP-2-N,3-O-bis[(3R)-3-hydroxyacyl]-alpha-D-glucosamine = a lipid A disaccharide + UDP + H(+). It participates in bacterial outer membrane biogenesis; LPS lipid A biosynthesis. In terms of biological role, condensation of UDP-2,3-diacylglucosamine and 2,3-diacylglucosamine-1-phosphate to form lipid A disaccharide, a precursor of lipid A, a phosphorylated glycolipid that anchors the lipopolysaccharide to the outer membrane of the cell. This Legionella pneumophila (strain Lens) protein is Lipid-A-disaccharide synthase 2.